Here is a 397-residue protein sequence, read N- to C-terminus: Tryptophan synthase beta chain (397 aa).

The residue at position 86 (lysine 86) is an N6-(pyridoxal phosphate)lysine.

Belongs to the TrpB family. In terms of assembly, tetramer of two alpha and two beta chains. Pyridoxal 5'-phosphate serves as cofactor.

The enzyme catalyses (1S,2R)-1-C-(indol-3-yl)glycerol 3-phosphate + L-serine = D-glyceraldehyde 3-phosphate + L-tryptophan + H2O. It participates in amino-acid biosynthesis; L-tryptophan biosynthesis; L-tryptophan from chorismate: step 5/5. Functionally, the beta subunit is responsible for the synthesis of L-tryptophan from indole and L-serine. This Tolumonas auensis (strain DSM 9187 / NBRC 110442 / TA 4) protein is Tryptophan synthase beta chain.